The primary structure comprises 28 residues: Odorant-binding protein 1 (28 aa).

It belongs to the calycin superfamily. Lipocalin family. In terms of tissue distribution, nasal mucosa.

The protein localises to the secreted. It is found in the extracellular space. Its function is as follows. This soluble protein may play a specific role in odor discrimination and perception. The polypeptide is Odorant-binding protein 1 (Hystrix cristata (North African crested porcupine)).